Consider the following 309-residue polypeptide: Ribosomal RNA small subunit methyltransferase H (309 aa).

S-adenosyl-L-methionine-binding positions include 36 to 38 (AGH), aspartate 55, phenylalanine 81, aspartate 102, and glutamine 109.

It belongs to the methyltransferase superfamily. RsmH family.

Its subcellular location is the cytoplasm. The enzyme catalyses cytidine(1402) in 16S rRNA + S-adenosyl-L-methionine = N(4)-methylcytidine(1402) in 16S rRNA + S-adenosyl-L-homocysteine + H(+). In terms of biological role, specifically methylates the N4 position of cytidine in position 1402 (C1402) of 16S rRNA. The chain is Ribosomal RNA small subunit methyltransferase H from Mycoplasma genitalium (strain ATCC 33530 / DSM 19775 / NCTC 10195 / G37) (Mycoplasmoides genitalium).